Consider the following 225-residue polypeptide: Glucose-induced degradation protein 8 homolog (225 aa).

One can recognise a LisH domain in the interval 22 to 54 (QRAEMNRLIMDYLVTEGYKEAAEKFRIESGTQP). Residues 60-117 (SLDDRIKIREAVQKGDLEQAVSMTNKLNPDILDSNQQLYFHLQQQRLIELIREKDIEA) enclose the CTLH domain.

It belongs to the GID8 family.

It localises to the cytoplasm. Its subcellular location is the nucleus. Core component of the CTLH E3 ubiquitin-protein ligase complex that mediates ubiquitination and subsequent proteasomal degradation of target proteins. Acts as a positive regulator of Wnt signaling pathway by promoting beta-catenin (CTNNB1) nuclear accumulation. This is Glucose-induced degradation protein 8 homolog from Nematostella vectensis (Starlet sea anemone).